Consider the following 254-residue polypeptide: Acetylglutamate kinase (254 aa).

Residues 40-41, arginine 62, and asparagine 154 each bind substrate; that span reads GG.

This sequence belongs to the acetylglutamate kinase family. ArgB subfamily.

It localises to the cytoplasm. It catalyses the reaction N-acetyl-L-glutamate + ATP = N-acetyl-L-glutamyl 5-phosphate + ADP. It functions in the pathway amino-acid biosynthesis; L-arginine biosynthesis; N(2)-acetyl-L-ornithine from L-glutamate: step 2/4. Catalyzes the ATP-dependent phosphorylation of N-acetyl-L-glutamate. The sequence is that of Acetylglutamate kinase from Staphylococcus aureus (strain Mu3 / ATCC 700698).